The chain runs to 488 residues: Proline--tRNA ligase (488 aa).

The protein belongs to the class-II aminoacyl-tRNA synthetase family. ProS type 3 subfamily. Homodimer.

It localises to the cytoplasm. The enzyme catalyses tRNA(Pro) + L-proline + ATP = L-prolyl-tRNA(Pro) + AMP + diphosphate. In terms of biological role, catalyzes the attachment of proline to tRNA(Pro) in a two-step reaction: proline is first activated by ATP to form Pro-AMP and then transferred to the acceptor end of tRNA(Pro). This Pyrobaculum islandicum (strain DSM 4184 / JCM 9189 / GEO3) protein is Proline--tRNA ligase.